We begin with the raw amino-acid sequence, 405 residues long: Deoxyguanosinetriphosphate triphosphohydrolase-like protein (405 aa).

An HD domain is found at 75–219 (RLTHTIEVAQ…AAIADDIAYN (145 aa)).

This sequence belongs to the dGTPase family. Type 2 subfamily.

In Rhizobium johnstonii (strain DSM 114642 / LMG 32736 / 3841) (Rhizobium leguminosarum bv. viciae), this protein is Deoxyguanosinetriphosphate triphosphohydrolase-like protein.